The sequence spans 343 residues: Small ribosomal subunit biogenesis GTPase RsgA (343 aa).

Positions 116 to 275 (RGQLKPVAAN…LIDSPGIREF (160 aa)) constitute a CP-type G domain. Residues 163-166 (NKAD) and 217-225 (GQSGVGKSS) each bind GTP. Residues C299, C304, H306, and C312 each coordinate Zn(2+).

It belongs to the TRAFAC class YlqF/YawG GTPase family. RsgA subfamily. As to quaternary structure, monomer. Associates with 30S ribosomal subunit, binds 16S rRNA. Requires Zn(2+) as cofactor.

It is found in the cytoplasm. Its function is as follows. One of several proteins that assist in the late maturation steps of the functional core of the 30S ribosomal subunit. Helps release RbfA from mature subunits. May play a role in the assembly of ribosomal proteins into the subunit. Circularly permuted GTPase that catalyzes slow GTP hydrolysis, GTPase activity is stimulated by the 30S ribosomal subunit. The polypeptide is Small ribosomal subunit biogenesis GTPase RsgA (Azotobacter vinelandii (strain DJ / ATCC BAA-1303)).